A 391-amino-acid polypeptide reads, in one-letter code: Succinate--CoA ligase [GDP-forming] subunit beta, mitochondrial (391 aa).

An ATP-grasp domain is found at 5-233 (KKIMADHGVT…NAEFRQKEIF (229 aa)). GTP contacts are provided by residues Gln16, 49–51 (GRG), and Leu105. Residues Asn202 and Asp216 each coordinate Mg(2+). Residues Asn267 and 324–326 (GIV) contribute to the substrate site.

It belongs to the succinate/malate CoA ligase beta subunit family. GTP-specific subunit beta subfamily. In terms of assembly, heterodimer of an alpha and a beta subunit. The beta subunit determines specificity for GTP. It depends on Mg(2+) as a cofactor. In terms of tissue distribution, widely expressed. Not present in breast muscle.

It is found in the mitochondrion. It catalyses the reaction GTP + succinate + CoA = succinyl-CoA + GDP + phosphate. It participates in carbohydrate metabolism; tricarboxylic acid cycle; succinate from succinyl-CoA (ligase route): step 1/1. Functionally, GTP-specific succinyl-CoA synthetase functions in the citric acid cycle (TCA), coupling the hydrolysis of succinyl-CoA to the synthesis of GTP and thus represents the only step of substrate-level phosphorylation in the TCA. The beta subunit provides nucleotide specificity of the enzyme and binds the substrate succinate, while the binding sites for coenzyme A and phosphate are found in the alpha subunit. The polypeptide is Succinate--CoA ligase [GDP-forming] subunit beta, mitochondrial (Columba livia (Rock dove)).